The chain runs to 559 residues: Nucleoprotein (559 aa).

The tract at residues 53–235 (MRKEKRTDSD…ITQEQSQINI (183 aa)) is binding site for the cap structure m7GTP. Mn(2+) is bound by residues Asp378 and Glu380. 4 residues coordinate Zn(2+): Glu388, Cys495, His498, and Cys519. Mn(2+) is bound at residue Asp523.

The protein belongs to the arenaviridae nucleocapsid protein family. Homomultimerizes to form the nucleocapsid. Binds to viral genomic RNA. Interacts with glycoprotein G2. Interacts with protein Z; this interaction probably directs the encapsidated genome to budding sites. Interacts with protein L; this interaction does not interfere with Z-L interaction. Interacts with host IKBKE (via Protein kinase domain); the interaction inhibits IKBKE kinase activity.

The protein localises to the virion. It is found in the host cytoplasm. In terms of biological role, encapsidates the genome, protecting it from nucleases. The encapsidated genomic RNA is termed the nucleocapsid (NC). Serves as template for viral transcription and replication. The increased presence of protein N in host cell does not seem to trigger the switch from transcription to replication as observed in other negative strain RNA viruses. Through the interaction with host IKBKE, strongly inhibits the phosphorylation and nuclear translocation of host IRF3, a protein involved in interferon activation pathway, leading to the inhibition of interferon-beta and IRF3-dependent promoters activation. Also encodes a functional 3'-5' exoribonuclease that degrades preferentially dsRNA substrates and thereby participates in the suppression of interferon induction. This is Nucleoprotein from Sooretamys angouya (Paraguayan rice rat).